The primary structure comprises 378 residues: Queuine tRNA-ribosyltransferase (378 aa).

The Proton acceptor role is filled by D91. Substrate-binding positions include 91–95, D145, Q197, and G224; that span reads DSGGF. D274 acts as the Nucleophile in catalysis. Residues 279-283 are RNA binding; important for wobble base 34 recognition; the sequence is TRLAR. Residues C312, C314, C317, and H343 each coordinate Zn(2+).

It belongs to the queuine tRNA-ribosyltransferase family. Homodimer. Within each dimer, one monomer is responsible for RNA recognition and catalysis, while the other monomer binds to the replacement base PreQ1. It depends on Zn(2+) as a cofactor.

The catalysed reaction is 7-aminomethyl-7-carbaguanine + guanosine(34) in tRNA = 7-aminomethyl-7-carbaguanosine(34) in tRNA + guanine. Its pathway is tRNA modification; tRNA-queuosine biosynthesis. Catalyzes the base-exchange of a guanine (G) residue with the queuine precursor 7-aminomethyl-7-deazaguanine (PreQ1) at position 34 (anticodon wobble position) in tRNAs with GU(N) anticodons (tRNA-Asp, -Asn, -His and -Tyr). Catalysis occurs through a double-displacement mechanism. The nucleophile active site attacks the C1' of nucleotide 34 to detach the guanine base from the RNA, forming a covalent enzyme-RNA intermediate. The proton acceptor active site deprotonates the incoming PreQ1, allowing a nucleophilic attack on the C1' of the ribose to form the product. After dissociation, two additional enzymatic reactions on the tRNA convert PreQ1 to queuine (Q), resulting in the hypermodified nucleoside queuosine (7-(((4,5-cis-dihydroxy-2-cyclopenten-1-yl)amino)methyl)-7-deazaguanosine). In Methylacidiphilum infernorum (isolate V4) (Methylokorus infernorum (strain V4)), this protein is Queuine tRNA-ribosyltransferase.